The primary structure comprises 258 residues: MNELKKPHILVCNDDGIEGEGIHVLAASMKKIGRVTVVAPAEPHSGMSHAMTLGVPLRIKEYQRNNRFFGYTVSGTPVDCIKVALSHILDDKPDILVSGINYGSNTATNTLYSGTVAAALEGAIQGITSLAFSLATYEHADFTYAGKFARKLAKKVLQQGIPADTILSVNIPNVPESEIAGVLSTSQGRSRWEENAIERNDMYGNPYYWLNGTLKLLDDSLRQDEYAVRRNYVTVTPLSCDLTNHTFLDSLNQWNLQK.

Aspartate 14, aspartate 15, serine 45, and asparagine 101 together coordinate a divalent metal cation.

This sequence belongs to the SurE nucleotidase family. A divalent metal cation serves as cofactor.

The protein localises to the cytoplasm. It catalyses the reaction a ribonucleoside 5'-phosphate + H2O = a ribonucleoside + phosphate. Nucleotidase that shows phosphatase activity on nucleoside 5'-monophosphates. This is 5'-nucleotidase SurE from Chlorobium limicola (strain DSM 245 / NBRC 103803 / 6330).